The following is a 225-amino-acid chain: Insulin-induced gene 2 protein (225 aa).

Over 1 to 28 (MAEGETKSPGPKKCGPYISSVTSQSVNL) the chain is Cytoplasmic. Residues 29-51 (MIRGVVLFFIGVFLALVLNLLQI) traverse the membrane as a helical segment. Residues 52 to 70 (QRNVTLFPPDVIASIFSSA) are Lumenal-facing. A helical transmembrane segment spans residues 71–88 (WWVPPCCGTASAVIGLLY). Over 89-103 (PCIDRHLGEPHKFKR) the chain is Cytoplasmic. The chain crosses the membrane as a helical span at residues 104–126 (EWSSVMRCVAVFVGINHASAKVD). The Lumenal segment spans residues 127-129 (FDN). A helical membrane pass occupies residues 130-148 (NIQLSLTLAALSIGLWWTF). Residues 149–153 (DRSRS) lie on the Cytoplasmic side of the membrane. Residue Ser151 is modified to Phosphoserine. A helical membrane pass occupies residues 154 to 175 (GFGLGVGIAFLATLVTQLLVYN). Over 176–189 (GVYQYTSPDFLYVR) the chain is Lumenal. A helical membrane pass occupies residues 190–207 (SWLPCIFFAGGITMGNIG). The Cytoplasmic segment spans residues 208–225 (RQLAMYECKVIAEKSHQE). At Cys215 the chain carries Cysteine sulfenic acid (-SOH); alternate. A Glycyl cysteine thioester (Cys-Gly) (interchain with G-Cter in ubiquitin); alternate cross-link involves residue Cys215. Residues 219–225 (AEKSHQE) carry the KxHxx motif.

The protein belongs to the INSIG family. Interacts with SCAP; interaction is direct and only takes place in the presence of sterols; it prevents interaction between SCAP and the coat protein complex II (COPII). Associates with the SCAP-SREBP complex (composed of SCAP and SREBF1/SREBP1 or SREBF2/SREBP2); association is mediated via its interaction with SCAP and only takes place in the presence of sterols. Interacts with RNF139. Interacts with RNF145. In terms of processing, phosphorylation at Ser-151 by PCK1 reduces binding to oxysterol, disrupting the interaction between INSIG2 and SCAP, thereby promoting nuclear translocation of SREBP proteins (SREBF1/SREBP1 or SREBF2/SREBP2) and subsequent transcription of downstream lipogenesis-related genes. Polyubiquitinated by AMFR/gp78 at Cys-215 in some tissues such as adipose tissues, undifferentiated myoblasts and liver, leading to its degradation. In differentiated myotubes, Cys-215 oxidation prevents ubiquitination at the same site, resulting in protein stabilization. Post-translationally, oxidized at Cys-215 in differentiated myotubes, preventing ubiquitination at the same site, and resulting in protein stabilization.

Its subcellular location is the endoplasmic reticulum membrane. Its function is as follows. Oxysterol-binding protein that mediates feedback control of cholesterol synthesis by controlling both endoplasmic reticulum to Golgi transport of SCAP and degradation of HMGCR. Acts as a negative regulator of cholesterol biosynthesis by mediating the retention of the SCAP-SREBP complex in the endoplasmic reticulum, thereby blocking the processing of sterol regulatory element-binding proteins (SREBPs) SREBF1/SREBP1 and SREBF2/SREBP2. Binds oxysterol, including 22-hydroxycholesterol, 24-hydroxycholesterol, 25-hydroxycholesterol and 27-hydroxycholesterol, regulating interaction with SCAP and retention of the SCAP-SREBP complex in the endoplasmic reticulum. In presence of oxysterol, interacts with SCAP, retaining the SCAP-SREBP complex in the endoplasmic reticulum, thereby preventing SCAP from escorting SREBF1/SREBP1 and SREBF2/SREBP2 to the Golgi. Sterol deprivation or phosphorylation by PCK1 reduce oxysterol-binding, disrupting the interaction between INSIG2 and SCAP, thereby promoting Golgi transport of the SCAP-SREBP complex, followed by processing and nuclear translocation of SREBF1/SREBP1 and SREBF2/SREBP2. Also regulates cholesterol synthesis by regulating degradation of HMGCR: initiates the sterol-mediated ubiquitin-mediated endoplasmic reticulum-associated degradation (ERAD) of HMGCR via recruitment of the reductase to the ubiquitin ligase RNF139. The chain is Insulin-induced gene 2 protein from Sus scrofa (Pig).